A 94-amino-acid chain; its full sequence is Pyrimidine/purine nucleoside phosphorylase (94 aa).

It belongs to the nucleoside phosphorylase PpnP family.

It catalyses the reaction a purine D-ribonucleoside + phosphate = a purine nucleobase + alpha-D-ribose 1-phosphate. The catalysed reaction is adenosine + phosphate = alpha-D-ribose 1-phosphate + adenine. The enzyme catalyses cytidine + phosphate = cytosine + alpha-D-ribose 1-phosphate. It carries out the reaction guanosine + phosphate = alpha-D-ribose 1-phosphate + guanine. It catalyses the reaction inosine + phosphate = alpha-D-ribose 1-phosphate + hypoxanthine. The catalysed reaction is thymidine + phosphate = 2-deoxy-alpha-D-ribose 1-phosphate + thymine. The enzyme catalyses uridine + phosphate = alpha-D-ribose 1-phosphate + uracil. It carries out the reaction xanthosine + phosphate = alpha-D-ribose 1-phosphate + xanthine. Its function is as follows. Catalyzes the phosphorolysis of diverse nucleosides, yielding D-ribose 1-phosphate and the respective free bases. Can use uridine, adenosine, guanosine, cytidine, thymidine, inosine and xanthosine as substrates. Also catalyzes the reverse reactions. In Salmonella paratyphi C (strain RKS4594), this protein is Pyrimidine/purine nucleoside phosphorylase.